Here is a 196-residue protein sequence, read N- to C-terminus: Sulfur-rich protein (196 aa).

3 consecutive transmembrane segments (helical) span residues 34–54 (VTAG…LIGW), 76–96 (ITLL…MFIF), and 105–125 (FWLI…SLCF).

It localises to the membrane. The chain is Sulfur-rich protein (srp) from Chlamydia pneumoniae (Chlamydophila pneumoniae).